The primary structure comprises 1010 residues: MGAVWTVRLLCLFLLLLNTRQSAALPHNTDQCAEGSDACHIDAICQNTPTSYKCTCKTGFKGDGKHCEDIDECDVEYNGGCVHECNNIPGNYRCTCLDGFHLAHDGHNCLDVDECVFNNGGCQHVCVNTMGSYECRCKQGFFLSDNQHTCIHRSVEGLSCMNKEHGCGHICKESPKGGVACECRPGFELAKNQRGCILTCNHGNGGCQHICEDTEQGPICRCHVRYMLHADGRTCVERDEMAPTAPDHNATSLAEVDKRVKRRLLMETCAVNNGGCDSTCKDTSTGVRCSCPVGFTLQPDGKSCKDIDECELHNGGCDHYCRNTIGSFECSCRKGFKLLTDERSCQDIDECFFERTCDHTCVNSPGSFQCVCNKGYTLYGLAHCGDINECSFNNGGCEHTCENTMGSFGCHCRAGYKLHWNKKDCIEAEDSPLVPPPARPTLNCNKQGGGELCYLTCQSQVHISSGAEDSYTVTCGMPLPCHTGGQWNGSYCPGSGIKTIATFKSGQGKCNLKRSHENLAHSFKTALSDKRATENVQFSFVSLHCASSSRQQRSRHGRKAGEEEGSFITAQFELDVNLEEVTAEGCDLTCVRRRSEKRLRKTIRTLRKSINREQFHLHFAGSEYELAKKLVRPADTPDHCGTGQILLDKKCVKCSVGTYYDGEQGRCFLCPPGTYQDEEGQVSCDVCPGPEGRGIPETAGARNISECAGQCRPGQFSHDGFVPCLPCPQGTYQPEVGRTSCFTCGGSLTTKYDGSVSFQNCETKVQCSPGHYYNTSTHRCIRCPVGTYQMEFGQNYCIACPGNTTTDFDGSTNIMQCKNRHCGGELGEFTGYIESPNYPGNYPANIECTWTITPPPKRRILVVVPEIYLPIEDECGDYLVMRKSSLPNSVTTYETCQTYERPIAFTSRSKKLWIQFRSNEGNSGKGFQVPYVTYDEDYQELIEDIVRDGRLYASENHQEILKDKKLMRALFDVLAHPQNFFNYTAQESREMFPKSFIRFLRSKVLRFLRP.

Positions 1-24 (MGAVWTVRLLCLFLLLLNTRQSAA) are cleaved as a signal peptide. An EGF-like 1; calcium-binding domain is found at 28–68 (NTDQCAEGSDACHIDAICQNTPTSYKCTCKTGFKGDGKHCE). Cystine bridges form between C32–C45, C39–C54, C56–C67, C73–C85, C81–C94, C96–C109, C115–C126, and C122–C135. Residues 69-110 (DIDECDVEYNGGCVHECNNIPGNYRCTCLDGFHLAHDGHNCL) enclose the EGF-like 2; calcium-binding domain. An EGF-like 3; calcium-binding domain is found at 111–147 (DVDECVFNNGGCQHVCVNTMGSYECRCKQGFFLSDNQ). EGF-like domains follow at residues 160 to 196 (CMNKEHGCGHICKESPKGGVACECRPGFELAKNQRGC) and 200 to 235 (CNHGNGGCQHICEDTEQGPICRCHVRYMLHADGRTC). N-linked (GlcNAc...) asparagine glycosylation is present at N249. Residues 269–304 (CAVNNGGCDSTCKDTSTGVRCSCPVGFTLQPDGKSC) enclose the EGF-like 6 domain. Positions 306-346 (DIDECELHNGGCDHYCRNTIGSFECSCRKGFKLLTDERSCQ) constitute an EGF-like 7; calcium-binding domain. Cystine bridges form between C310–C321, C317–C330, C332–C345, C351–C361, C357–C370, C372–C384, C390–C401, C397–C410, and C412–C425. In terms of domain architecture, EGF-like 8; calcium-binding spans 347 to 385 (DIDECFFERTCDHTCVNSPGSFQCVCNKGYTLYGLAHCG). Residues 386 to 426 (DINECSFNNGGCEHTCENTMGSFGCHCRAGYKLHWNKKDCI) enclose the EGF-like 9; calcium-binding domain. N-linked (GlcNAc...) asparagine glycans are attached at residues N488, N703, N774, and N803. A disulfide bridge links C822 with C848. One can recognise a CUB domain in the interval 822-934 (CGGELGEFTG…KGFQVPYVTY (113 aa)). Residues 860–869 (ILVVVPEIYL) are interaction with the cholesterol-anchor of SHH. C875 and C896 are oxidised to a cystine. N982 carries an N-linked (GlcNAc...) asparagine glycan.

As to quaternary structure, interacts with SHH via the cholesterol anchor of the dually lipid-modified SHH (ShhNp). Interacts with PTCH1. Forms homooligomers and heterooligomers with SCUBE1 and SCUBE3. Interacts with VEGFR2. In terms of processing, N-glycosylated.

The protein localises to the secreted. It localises to the cell surface. Functionally, lipid-binding protein required for SHH long-range signaling by binding to the dually lipid-modified SHH (ShhNp) and by promoting ShhNp mobilization, solubilization and release from the cell membrane. Acts by enhancing the proteolytic processing (shedding) of the lipid-modified N- and C- terminal of ShhNp at the cell surface. Synergizes with DISP1 to cause an increase in SHH secretion. Probable cell surface coreceptor for VEGFR2 involved in VEGFR2-mediated angiogenesis. This Danio rerio (Zebrafish) protein is Signal peptide, CUB and EGF-like domain-containing protein 2 (scube2).